The sequence spans 176 residues: Large ribosomal subunit protein uL6 (176 aa).

The protein belongs to the universal ribosomal protein uL6 family. As to quaternary structure, part of the 50S ribosomal subunit.

Functionally, this protein binds to the 23S rRNA, and is important in its secondary structure. It is located near the subunit interface in the base of the L7/L12 stalk, and near the tRNA binding site of the peptidyltransferase center. This is Large ribosomal subunit protein uL6 from Methanothrix thermoacetophila (strain DSM 6194 / JCM 14653 / NBRC 101360 / PT) (Methanosaeta thermophila).